Consider the following 394-residue polypeptide: Protein TsgA homolog (394 aa).

The next 12 helical transmembrane spans lie at 11–31, 51–71, 76–96, 101–121, 135–155, 163–183, 205–225, 245–265, 273–293, 299–319, 333–353, and 362–382; these read WISFFSYALTGAVVIVTGMVL, FLNAGILLAVFLNAWLMEIVP, LIFGFVLMVLAVLGLMNSHSL, LCMFVLGVVSGITMSIGTFLI, LFTDSFFSMAGTLFPIIAAAI, YWVYACIGVIYVAIFILALCF, LGVALLAVAALCYILGQLGFI, SVVGYFWTAYMIGMWAFSAIL, IVTALALASTLLMYWFINTTD, WIIMGLGFFSSAIYTTIITLG, FILTCGTIGTMLTFVVTGPIV, and LATTNSLYAVVFLMCLLLGFV.

It belongs to the major facilitator superfamily. TsgA family.

The protein resides in the cell inner membrane. The sequence is that of Protein TsgA homolog from Erwinia tasmaniensis (strain DSM 17950 / CFBP 7177 / CIP 109463 / NCPPB 4357 / Et1/99).